The sequence spans 261 residues: Triosephosphate isomerase (261 aa).

Positions 11 and 13 each coordinate D-glyceraldehyde 3-phosphate. Catalysis depends on histidine 102, which acts as the Electrophile. Glutamate 174 acts as the Proton acceptor in catalysis. Glycine 180, leucine 239, and glycine 241 together coordinate D-glyceraldehyde 3-phosphate.

It belongs to the triosephosphate isomerase family. In terms of assembly, homodimer.

It carries out the reaction D-glyceraldehyde 3-phosphate = dihydroxyacetone phosphate. The protein operates within carbohydrate biosynthesis; gluconeogenesis. It participates in carbohydrate degradation; glycolysis; D-glyceraldehyde 3-phosphate from glycerone phosphate: step 1/1. Its function is as follows. Catalyzes the interconversion of glyceraldehyde 3-phosphate and dihydroxyacetone phosphate in the glycolytic and gluconeogenic pathways. The chain is Triosephosphate isomerase from Entamoeba histolytica (strain ATCC 30459 / HM-1:IMSS / ABRM).